The following is a 712-amino-acid chain: Polyribonucleotide nucleotidyltransferase (712 aa).

The Mg(2+) site is built by Asp-493 and Asp-499. One can recognise a KH domain in the interval 560–619; it reads PRLLTFKVDPEDIGKIIGPGGKMVRSITEATGAKVDISDDGTITVSSSVGGQAEAARAMI. One can recognise an S1 motif domain in the interval 629-697; sequence GQVYLGKVTR…HKGRVNLTRL (69 aa).

The protein belongs to the polyribonucleotide nucleotidyltransferase family. Mg(2+) is required as a cofactor.

Its subcellular location is the cytoplasm. It carries out the reaction RNA(n+1) + phosphate = RNA(n) + a ribonucleoside 5'-diphosphate. Its function is as follows. Involved in mRNA degradation. Catalyzes the phosphorolysis of single-stranded polyribonucleotides processively in the 3'- to 5'-direction. This chain is Polyribonucleotide nucleotidyltransferase, found in Synechococcus sp. (strain JA-3-3Ab) (Cyanobacteria bacterium Yellowstone A-Prime).